The following is a 126-amino-acid chain: Fluoride-specific ion channel FluC (126 aa).

4 helical membrane-spanning segments follow: residues 4-24, 35-55, 67-87, and 100-120; these read YLYI…VSGV, IGTF…TGLF, LLIL…MFES, and ALNI…GLAL. Positions 75 and 78 each coordinate Na(+).

Belongs to the fluoride channel Fluc/FEX (TC 1.A.43) family.

It is found in the cell inner membrane. It catalyses the reaction fluoride(in) = fluoride(out). Its activity is regulated as follows. Na(+) is not transported, but it plays an essential structural role and its presence is essential for fluoride channel function. Fluoride-specific ion channel. Important for reducing fluoride concentration in the cell, thus reducing its toxicity. In Maridesulfovibrio salexigens (strain ATCC 14822 / DSM 2638 / NCIMB 8403 / VKM B-1763) (Desulfovibrio salexigens), this protein is Fluoride-specific ion channel FluC.